Reading from the N-terminus, the 37-residue chain is Cytochrome b6-f complex subunit 5 (37 aa).

The chain crosses the membrane as a helical span at residues 5–25; that stretch reads LLSGIVLGLIPVTLAGLFVTA.

Belongs to the PetG family. The 4 large subunits of the cytochrome b6-f complex are cytochrome b6, subunit IV (17 kDa polypeptide, PetD), cytochrome f and the Rieske protein, while the 4 small subunits are PetG, PetL, PetM and PetN. The complex functions as a dimer.

The protein localises to the plastid. It is found in the chloroplast thylakoid membrane. Component of the cytochrome b6-f complex, which mediates electron transfer between photosystem II (PSII) and photosystem I (PSI), cyclic electron flow around PSI, and state transitions. PetG is required for either the stability or assembly of the cytochrome b6-f complex. This is Cytochrome b6-f complex subunit 5 from Chlorokybus atmophyticus (Soil alga).